Reading from the N-terminus, the 593-residue chain is Serine/threonine-protein kinase SSN3 (593 aa).

Positions 90-489 (YEIIGYIAAG…AIDALDHVYF (400 aa)) constitute a Protein kinase domain. 96-104 (IAAGTYGKV) provides a ligand contact to ATP. The interval 161-199 (KPSHKRFTPPNNSNSTQIRSNSGSETNVRINSSSITNNS) is disordered. The span at 169 to 185 (PPNNSNSTQIRSNSGSE) shows a compositional bias: polar residues. The span at 186-199 (TNVRINSSSITNNS) shows a compositional bias: low complexity. K211 is a binding site for ATP. Catalysis depends on D312, which acts as the Proton acceptor. Disordered stretches follow at residues 517–551 (DNDI…NMNG) and 569–593 (AAVS…KKRK). Residues 518–536 (NDITNVGNDNNQANHSQKQ) are compositionally biased toward polar residues. Low complexity predominate over residues 540–551 (GNNNNKNGNMNG). Over residues 573–585 (GNGNNPTSNTATG) the composition is skewed to polar residues.

The protein belongs to the protein kinase superfamily. CMGC Ser/Thr protein kinase family. CDC2/CDKX subfamily. In terms of assembly, component of the SRB8-11 complex, a regulatory module of the Mediator complex. Requires Mg(2+) as cofactor.

It is found in the nucleus. It carries out the reaction L-seryl-[protein] + ATP = O-phospho-L-seryl-[protein] + ADP + H(+). The enzyme catalyses L-threonyl-[protein] + ATP = O-phospho-L-threonyl-[protein] + ADP + H(+). The catalysed reaction is [DNA-directed RNA polymerase] + ATP = phospho-[DNA-directed RNA polymerase] + ADP + H(+). Component of the SRB8-11 complex. The SRB8-11 complex is a regulatory module of the Mediator complex which is itself involved in regulation of basal and activated RNA polymerase II-dependent transcription. The SRB8-11 complex may be involved in the transcriptional repression of a subset of genes regulated by Mediator. It may inhibit the association of the Mediator complex with RNA polymerase II to form the holoenzyme complex. The SRB8-11 complex phosphorylates the C-terminal domain (CTD) of the largest subunit of RNA polymerase II. The protein is Serine/threonine-protein kinase SSN3 (SSN3) of Kluyveromyces lactis (strain ATCC 8585 / CBS 2359 / DSM 70799 / NBRC 1267 / NRRL Y-1140 / WM37) (Yeast).